The sequence spans 245 residues: MFKAAINAELLKDAIAALAVIVDEVRFKIKPEGISVKAVDPANVAMGIFELGSSAFDEYSADECEIGLDLNKITDLLGIADRNDTVRMGLEEGSNKLLIDVGGLSYTLSLLDPSTIRAEPRVPQLELPAKVVLNGADLRRAVKAAEKISDHMLMGVSGDTFYMEAKGDTDQVRLEMGRDQLIDLKAGEACSLFSLDYLTDIVKPTNKVNEVTLSLGRDFPILIDFEIANGAGRISYLLAPRIESD.

Belongs to the PCNA family. Homotrimer. The subunits circularize to form a toroid; DNA passes through its center. Replication factor C (RFC) is required to load the toroid on the DNA.

In terms of biological role, sliding clamp subunit that acts as a moving platform for DNA processing. Responsible for tethering the catalytic subunit of DNA polymerase and other proteins to DNA during high-speed replication. The polypeptide is DNA polymerase sliding clamp (Methanosarcina acetivorans (strain ATCC 35395 / DSM 2834 / JCM 12185 / C2A)).